The sequence spans 307 residues: 2-dehydropantoate 2-reductase (307 aa).

NADP(+)-binding positions include 7 to 12 (GSGAMG), asparagine 102, and alanine 128. Asparagine 102 is a binding site for substrate. The active-site Proton donor is lysine 184. Substrate is bound by residues asparagine 188, asparagine 192, and serine 255. An NADP(+)-binding site is contributed by glutamate 268.

This sequence belongs to the ketopantoate reductase family.

Its subcellular location is the cytoplasm. It carries out the reaction (R)-pantoate + NADP(+) = 2-dehydropantoate + NADPH + H(+). It participates in cofactor biosynthesis; (R)-pantothenate biosynthesis; (R)-pantoate from 3-methyl-2-oxobutanoate: step 2/2. Catalyzes the NADPH-dependent reduction of ketopantoate into pantoic acid. This Streptococcus pyogenes serotype M18 (strain MGAS8232) protein is 2-dehydropantoate 2-reductase (apbA).